Here is a 296-residue protein sequence, read N- to C-terminus: UDP-N-acetylglucosamine transporter TMEM241 homolog (296 aa).

Helical transmembrane passes span 7–29 (AVGL…VLSV), 41–61 (WQTL…WLEI), 67–87 (SDVV…YAGS), 93–113 (LPIP…YGFQ), 126–146 (IFSI…DPQF), 147–167 (DADG…YKVF), 187–207 (VFSV…ISAL), 217–237 (FHSG…ASVK), 248–266 (ASWN…LIYF), and 272–291 (VPLT…LVYA).

It belongs to the nucleotide-sugar transporter family. SLC35A subfamily.

It localises to the golgi apparatus. The protein resides in the cis-Golgi network membrane. Functionally, golgi-localized UDP-N-acetylglucosamine (UDP-GlcNAc) transporter that transports UDP-N-acetylglucosamine into Golgi lumen. This Xenopus laevis (African clawed frog) protein is UDP-N-acetylglucosamine transporter TMEM241 homolog (tmem241).